The sequence spans 195 residues: MTNQKPSRRESILQALVELLQSDPGARITTAGLAKTVGVTEAALYRHFPSKRKMFEALIEFAEEAVFSRCQVILQEQEDVRVRLQQLSHLVLVFAERNPGLCCVLTGDALMGEDESLRKRASQFFERLETQIRQALKEGEIRQGLRPRTTAARGADFVMVFVEGRIQRFVRSSFLRLPTSDFDEAWGLVSEAVWG.

One can recognise an HTH tetR-type domain in the interval 6–66 (PSRRESILQA…ALIEFAEEAV (61 aa)). The segment at residues 29-48 (TTAGLAKTVGVTEAALYRHF) is a DNA-binding region (H-T-H motif). Residues 118 to 138 (RKRASQFFERLETQIRQALKE) adopt a coiled-coil conformation.

The protein belongs to the nucleoid occlusion factor SlmA family. As to quaternary structure, homodimer. Interacts with FtsZ.

The protein resides in the cytoplasm. It is found in the nucleoid. Its function is as follows. Required for nucleoid occlusion (NO) phenomenon, which prevents Z-ring formation and cell division over the nucleoid. Acts as a DNA-associated cell division inhibitor that binds simultaneously chromosomal DNA and FtsZ, and disrupts the assembly of FtsZ polymers. SlmA-DNA-binding sequences (SBS) are dispersed on non-Ter regions of the chromosome, preventing FtsZ polymerization at these regions. The sequence is that of Nucleoid occlusion factor SlmA from Marinobacter nauticus (strain ATCC 700491 / DSM 11845 / VT8) (Marinobacter aquaeolei).